The sequence spans 362 residues: Porin Omp2b (362 aa).

An N-terminal signal peptide occupies residues 1–22; sequence MNIKSLLLGSAAALVAASGAQA.

The protein belongs to the alphaproteobacteria porin family. As to quaternary structure, homotrimer.

It is found in the cell outer membrane. In terms of biological role, forms passive diffusion pores that allow small molecular weight hydrophilic materials across the outer membrane. This Brucella abortus (strain S19) protein is Porin Omp2b (omp2b).